A 239-amino-acid chain; its full sequence is Fibroblast growth factor 3 (239 aa).

An N-terminal signal peptide occupies residues 1–17 (MGLIWLLLLSLLEPGWP). Asn65 carries N-linked (GlcNAc...) asparagine glycosylation. Positions 193–239 (QLQSGLPRPPGKGVQPRRRRQKQSPDNLEPSHVQASRLGSQLEASAH) are disordered. Residues 225–239 (VQASRLGSQLEASAH) are compositionally biased toward polar residues.

Belongs to the heparin-binding growth factors family. Interacts with FGFR1 and FGFR2. Affinity between fibroblast growth factors (FGFs) and their receptors is increased by heparan sulfate glycosaminoglycans that function as coreceptors.

The protein resides in the secreted. Its function is as follows. Plays an important role in the regulation of embryonic development, cell proliferation, and cell differentiation. Required for normal ear development. The polypeptide is Fibroblast growth factor 3 (FGF3) (Homo sapiens (Human)).